Reading from the N-terminus, the 811-residue chain is DNA gyrase subunit A (811 aa).

The 464-residue stretch at 30–493 (LPDVRDGLKP…LEEDIGKEDL (464 aa)) folds into the Topo IIA-type catalytic domain. The active-site O-(5'-phospho-DNA)-tyrosine intermediate is Y118. The GyrA-box signature appears at 520-526 (QGRGGRG).

The protein belongs to the type II topoisomerase GyrA/ParC subunit family. In terms of assembly, heterotetramer, composed of two GyrA and two GyrB chains. In the heterotetramer, GyrA contains the active site tyrosine that forms a transient covalent intermediate with DNA, while GyrB binds cofactors and catalyzes ATP hydrolysis.

The protein resides in the cytoplasm. The enzyme catalyses ATP-dependent breakage, passage and rejoining of double-stranded DNA.. Functionally, a type II topoisomerase that negatively supercoils closed circular double-stranded (ds) DNA in an ATP-dependent manner to modulate DNA topology and maintain chromosomes in an underwound state. Negative supercoiling favors strand separation, and DNA replication, transcription, recombination and repair, all of which involve strand separation. Also able to catalyze the interconversion of other topological isomers of dsDNA rings, including catenanes and knotted rings. Type II topoisomerases break and join 2 DNA strands simultaneously in an ATP-dependent manner. The chain is DNA gyrase subunit A from Deinococcus deserti (strain DSM 17065 / CIP 109153 / LMG 22923 / VCD115).